The primary structure comprises 340 residues: ATP-dependent 6-phosphofructokinase (340 aa).

Position 11 (glycine 11) interacts with ATP. Position 21-25 (21-25 (RAVVR)) interacts with ADP. Residues 72–73 (RY) and 102–105 (GDGS) contribute to the ATP site. Aspartate 103 provides a ligand contact to Mg(2+). Residue 125-127 (TID) coordinates substrate. The active-site Proton acceptor is the aspartate 127. Residue arginine 154 participates in ADP binding. Residues arginine 162 and 169–171 (MGR) contribute to the substrate site. ADP-binding positions include 185-187 (GAD) and 213-215 (KHH). Residues glutamate 222, arginine 244, and 250-253 (HLLR) contribute to the substrate site.

The protein belongs to the phosphofructokinase type A (PFKA) family. ATP-dependent PFK group I subfamily. Prokaryotic clade 'B1' sub-subfamily. As to quaternary structure, homotetramer. Mg(2+) serves as cofactor.

It localises to the cytoplasm. It catalyses the reaction beta-D-fructose 6-phosphate + ATP = beta-D-fructose 1,6-bisphosphate + ADP + H(+). It participates in carbohydrate degradation; glycolysis; D-glyceraldehyde 3-phosphate and glycerone phosphate from D-glucose: step 3/4. Allosterically activated by ADP and other diphosphonucleosides, and allosterically inhibited by phosphoenolpyruvate. Its function is as follows. Catalyzes the phosphorylation of D-fructose 6-phosphate to fructose 1,6-bisphosphate by ATP, the first committing step of glycolysis. This chain is ATP-dependent 6-phosphofructokinase, found in Streptococcus agalactiae serotype Ia (strain ATCC 27591 / A909 / CDC SS700).